The primary structure comprises 236 residues: MKLINSPKLKIIAIVPAAGIGRRMKLDFPKQYIKIKDCTILEYTLKTLLSHPNIVRIVVSLHQEDNFFQKLSISSDLRVFSVLGGNERIHSVLSGLIITTDAKWVIIHDAVRPCLSYQDLENLIAITKNTKVGGILARPVCDTIKYSNRKNKTILHTIPRNQLWHALTPQLFPINLLRFCLKKIVEDKINITDEASALEYCGYHPLIVLGSYKNIKITYPEDLIFAEFYLKELLKN.

The protein belongs to the IspD/TarI cytidylyltransferase family. IspD subfamily. Homodimer.

The enzyme catalyses 2-C-methyl-D-erythritol 4-phosphate + CTP + H(+) = 4-CDP-2-C-methyl-D-erythritol + diphosphate. The protein operates within isoprenoid biosynthesis; isopentenyl diphosphate biosynthesis via DXP pathway; isopentenyl diphosphate from 1-deoxy-D-xylulose 5-phosphate: step 2/6. In terms of biological role, catalyzes the formation of 4-diphosphocytidyl-2-C-methyl-D-erythritol from CTP and 2-C-methyl-D-erythritol 4-phosphate (MEP). The chain is 2-C-methyl-D-erythritol 4-phosphate cytidylyltransferase from Buchnera aphidicola subsp. Schizaphis graminum (strain Sg).